The chain runs to 391 residues: Phosphatidate cytidylyltransferase 4, chloroplastic (391 aa).

Residues 1 to 61 constitute a chloroplast transit peptide; that stretch reads MATFAELVLS…SVSRRFLTAV (61 aa). 6 helical membrane passes run 102-122, 175-195, 202-222, 254-274, 298-318, and 321-341; these read IFGI…GWVF, FGNI…ALLV, FAQL…PSFW, VGLV…TFAF, IVGL…LSWP, and LFSS…GDLT.

It belongs to the CDS family. It depends on Mg(2+) as a cofactor.

The protein resides in the plastid. It is found in the chloroplast membrane. The enzyme catalyses a 1,2-diacyl-sn-glycero-3-phosphate + CTP + H(+) = a CDP-1,2-diacyl-sn-glycerol + diphosphate. Its pathway is phospholipid metabolism; CDP-diacylglycerol biosynthesis; CDP-diacylglycerol from sn-glycerol 3-phosphate: step 3/3. With respect to regulation, highest activities is obtained at about 30 mM CTP and 2 mM phosphatidic acid (PA). Its function is as follows. May be involved in the synthesis of minor phospholipids and in modulation of IP3-mediated signal transduction. Promotes the biosynthesis of plastidial phosphatidylglycerol (PG) which is required for structure and function of thylakoid membranes and, hence, for photoautotrophic growth. This Arabidopsis thaliana (Mouse-ear cress) protein is Phosphatidate cytidylyltransferase 4, chloroplastic.